A 401-amino-acid polypeptide reads, in one-letter code: Glutamyl-tRNA reductase (401 aa).

Substrate-binding positions include 45-48 (TCNR), Ser101, 106-108 (EDQ), and Gln112. Residue Cys46 is the Nucleophile of the active site. Residue 177 to 182 (GYGDVG) participates in NADP(+) binding.

It belongs to the glutamyl-tRNA reductase family. In terms of assembly, homodimer.

It carries out the reaction (S)-4-amino-5-oxopentanoate + tRNA(Glu) + NADP(+) = L-glutamyl-tRNA(Glu) + NADPH + H(+). It participates in porphyrin-containing compound metabolism; protoporphyrin-IX biosynthesis; 5-aminolevulinate from L-glutamyl-tRNA(Glu): step 1/2. In terms of biological role, catalyzes the NADPH-dependent reduction of glutamyl-tRNA(Glu) to glutamate 1-semialdehyde (GSA). The polypeptide is Glutamyl-tRNA reductase (Clostridium botulinum (strain Alaska E43 / Type E3)).